The primary structure comprises 775 residues: MKTVIARTSSKLARTPRMNEEIVGFEDVIENLRKKLLSETKGQDVISIHGMPGLGKTTLANRLYSDRSVVSQFDICAQCCVSQVYSYKDLLLSLLRDAIGDESGSRELPDNELADMLRKTLLPRRYLILVDDVWDNSAWDDLRGCFPDVNNRSRIILTTRHHEVAKYASVHSDPLHLRMFYEDESWKLLEKKVFGEQSCSPLLKDVGLRIAKLCGKLPLSIVFVAGTLSEMEKEVECWEQMANNLGGPKLSSFLEDRVIDISRLIRLWISESFIKSSEGRSLEDIAEGYLENLIGRNLVMVTQRADSDGMVKACRLHDVLLDFCKKRAAEENFLLCIKRDQSTKAVISHKQQAHLAFSKMDNLVEWSASSSLVGSVIFKSYDPYFARCPLSSHAFALSHILINFKFLKVLDLEHQVVIDFNPTEHFYLRYLSAHIDQNSIPSSISNLWNLETLILKRTPAGRLNTLLLPSTIWDMVKLRHLHIPNFRAESEDALLENSAKLYDLETLSTTYFSSVEKAELMLRKTPNLRKLICEVQFLEYPNQYHVLNFPVRLEMLKLYRFNNSKVIPFYISAPNLKYLKLSGFYLDSHYLSETADHLKHLEVLKLYRVEFGDHGEWKVSNGMFPQLKILKLNYVCLMKWIVADDAFPNLEQLVLRGCKDLMEIPFCFMDILSLKYIELDNCNKSVVKSAKDIEEAQVEDNQNTNFKLVIIKKMILQFDISHDKEIDNAFKRLASLPGVDSISIDMIEKKLTVGGDMNANEVRLVVGKLIDSGML.

A coiled-coil region spans residues 16–39 (PRMNEEIVGFEDVIENLRKKLLSE). An NB-ARC domain is found at 17 to 237 (RMNEEIVGFE…LSEMEKEVEC (221 aa)). 50-57 (GMPGLGKT) serves as a coordination point for ATP. One can recognise an HMA domain in the interval 711–775 (IKKMILQFDI…VGKLIDSGML (65 aa)).

Belongs to the disease resistance NB-LRR family.

The protein resides in the cytoplasm. It is found in the membrane. Its function is as follows. Confers resistance to late blight (Phytophthora infestans) races carrying the avirulence gene Avr1. Resistance proteins guard the plant against pathogens that contain an appropriate avirulence protein via an indirect interaction with this avirulence protein. That triggers a defense system including the hypersensitive response, which restricts the pathogen growth. The sequence is that of Putative late blight resistance protein homolog R1A-3 (R1A-3) from Solanum demissum (Wild potato).